A 411-amino-acid polypeptide reads, in one-letter code: MWIQQLLGLSSMSIRWPGRPLGSHAWILIAMFQLAVDLPACEALGPGPEFWLLPRSPPRPPRLWSFRSGQPARVPAPVWSPRPPRVERIHGQMQMPRARRAHRPRDQAAALVPKAGLAKPPAAAKSSPSLASSSSSSSSAVAGGAPEQQALLRRGKRHLQGDGLSSFDSRGSRPTTETEFIAWGPTGDEEALESNTFPGVYGPTTVSILQTRKTTVAATTTTTTTATPMTLQTKGFTESLDPRRRIPGGVSTTEPSTSPSNNGEVTQPPRILGEASGLAVHQIITITVSLIMVIAALITTLVLKNCCAQSGNTRRNSHQRKTNQQEESCQNLTDFPSARVPSSLDIFTAYNETLQCSHECVRASVPVYTDETLHSTTGEYKSTFNGNRPSSSDRHLIPVAFVSEKWFEISC.

The N-terminal stretch at 1-43 is a signal peptide; sequence MWIQQLLGLSSMSIRWPGRPLGSHAWILIAMFQLAVDLPACEA. The Extracellular segment spans residues 44-282; the sequence is LGPGPEFWLL…GEASGLAVHQ (239 aa). 3 disordered regions span residues 89–108, 115–197, and 239–268; these read IHGQ…RDQA, AGLA…SNTF, and SLDP…VTQP. Positions 115-146 are enriched in low complexity; it reads AGLAKPPAAAKSSPSLASSSSSSSSAVAGGAP. Over residues 166 to 178 the composition is skewed to polar residues; the sequence is SFDSRGSRPTTET. Over residues 247–263 the composition is skewed to low complexity; that stretch reads PGGVSTTEPSTSPSNNG. A helical transmembrane segment spans residues 283-303; sequence IITITVSLIMVIAALITTLVL. A targeting signals region spans residues 303–411; sequence LKNCCAQSGN…VSEKWFEISC (109 aa). Residues 304 to 411 lie on the Cytoplasmic side of the membrane; sequence KNCCAQSGNT…VSEKWFEISC (108 aa). The interval 311–330 is disordered; sequence GNTRRNSHQRKTNQQEESCQ.

Forms a complex with CDH1 and CTNNB1; interacts directly with CTNNB1. Interacts with AP1M2. Interacts with isoform 2 of BSG/CD147. Post-translationally, thr-237 and Ser-239 may be phosphorylated; however as this position is probably extracellular, the in vivo relevance is not proven. In terms of tissue distribution, expressed in uterus and pancreas (at protein level).

The protein resides in the basolateral cell membrane. It is found in the apical cell membrane. The protein localises to the cell junction. It localises to the adherens junction. In terms of biological role, plays a role in cell adhesion and cell migration. This Homo sapiens (Human) protein is Adherens junction-associated protein 1 (AJAP1).